A 403-amino-acid polypeptide reads, in one-letter code: GPI-N-acetylgalactosamine transferase PGAP4 (403 aa).

Over 1–22 (MSTSTSPAAMLLRRLRRLSWGS) the chain is Cytoplasmic. A helical transmembrane segment spans residues 23–43 (TAVQLFILTVVTFGLLAPLAC). The Lumenal segment spans residues 44 to 259 (HRLLHSYFYL…RLQHYTNPEP (216 aa)). Residue Val109 coordinates UDP-N-acetyl-alpha-D-galactosamine. Cystine bridges form between Cys132-Cys136 and Cys144-Cys194. A DXD motif motif is present at residues 211–213 (EDD). Residues 260 to 280 (MRILEWVGVGMLLGPLLTWIY) traverse the membrane as a helical segment. Residues 281 to 287 (MRFASRP) are Cytoplasmic-facing. The chain crosses the membrane as a helical span at residues 288–308 (GFSWPVMLFFSLYSMGLVELV). At 309–403 (GRHYFLELRR…LRYNFHPSLL (95 aa)) the chain is on the lumenal side. The cysteines at positions 332 and 333 are disulfide-linked. Positions 334, 335, and 362 each coordinate UDP-N-acetyl-alpha-D-galactosamine.

This sequence belongs to the PGAP4 family. Glycosylated.

The protein resides in the golgi apparatus membrane. In terms of biological role, golgi-resident glycosylphosphatidylinositol (GPI)-N-acetylgalactosamine transferase that catalyzes the N-acetyl-beta-D-galactosamine transfer from an UDP-N-acetyl-alpha-D-galactosamine to the 4-OH-position of first mannose of the glycosylphosphatidylinositol (GPI) of a GPI-anchored protein (GPI-AP). This modification occurs after the fatty acid remodeling step of the GPI-anchor maturation. In Pongo abelii (Sumatran orangutan), this protein is GPI-N-acetylgalactosamine transferase PGAP4.